The primary structure comprises 1404 residues: G8 domain-containing protein DDB_G0286897 (1404 aa).

Residues 1 to 20 form the signal peptide; the sequence is MNYFKYFIFVVFLFFTIVKC. Helical transmembrane passes span 97–117 and 128–148; these read LVGF…GLFA and IIIL…IQSI. Asparagine 352, asparagine 365, asparagine 413, asparagine 481, asparagine 639, asparagine 838, asparagine 979, asparagine 1003, asparagine 1017, asparagine 1253, and asparagine 1334 each carry an N-linked (GlcNAc...) asparagine glycan. The region spanning 553-679 is the G8 domain; that stretch reads STWASGFVPL…YHNTWTKLST (127 aa).

This sequence belongs to the comF family.

Its subcellular location is the membrane. This is G8 domain-containing protein DDB_G0286897 from Dictyostelium discoideum (Social amoeba).